The sequence spans 106 residues: 3-phenylpropionate/cinnamic acid dioxygenase ferredoxin subunit (106 aa).

A Rieske domain is found at 4–99 (IYACPVADVP…VHVEGGDIFI (96 aa)). [2Fe-2S] cluster contacts are provided by Cys-42, His-44, Cys-62, and His-65.

This sequence belongs to the bacterial ring-hydroxylating dioxygenase ferredoxin component family. As to quaternary structure, this dioxygenase system consists of four proteins: the two subunits of the hydroxylase component (HcaE and HcaF), a ferredoxin (HcaC) and a ferredoxin reductase (HcaD). Requires [2Fe-2S] cluster as cofactor.

Its pathway is aromatic compound metabolism; 3-phenylpropanoate degradation. In terms of biological role, part of the multicomponent 3-phenylpropionate dioxygenase, that converts 3-phenylpropionic acid (PP) and cinnamic acid (CI) into 3-phenylpropionate-dihydrodiol (PP-dihydrodiol) and cinnamic acid-dihydrodiol (CI-dihydrodiol), respectively. This protein seems to be a 2Fe-2S ferredoxin. This Escherichia coli O139:H28 (strain E24377A / ETEC) protein is 3-phenylpropionate/cinnamic acid dioxygenase ferredoxin subunit.